A 69-amino-acid chain; its full sequence is Cold shock-like protein CspE (69 aa).

The CSD domain occupies 6–66 (GNVKWFNESK…GAKGPSAANV (61 aa)).

The protein resides in the cytoplasm. The sequence is that of Cold shock-like protein CspE (cspE) from Buchnera aphidicola subsp. Acyrthosiphon pisum (strain APS) (Acyrthosiphon pisum symbiotic bacterium).